Reading from the N-terminus, the 337-residue chain is Fructose-1,6-bisphosphatase class 1 (337 aa).

Glu89, Asp112, Leu114, and Asp115 together coordinate Mg(2+). Substrate-binding positions include 115-118 (DGSS), Asn208, Tyr241, and Lys271. Position 277 (Glu277) interacts with Mg(2+).

This sequence belongs to the FBPase class 1 family. As to quaternary structure, homotetramer. It depends on Mg(2+) as a cofactor.

The protein localises to the cytoplasm. The catalysed reaction is beta-D-fructose 1,6-bisphosphate + H2O = beta-D-fructose 6-phosphate + phosphate. It functions in the pathway carbohydrate biosynthesis; gluconeogenesis. The sequence is that of Fructose-1,6-bisphosphatase class 1 from Yersinia enterocolitica serotype O:8 / biotype 1B (strain NCTC 13174 / 8081).